Consider the following 213-residue polypeptide: Transcriptional regulatory protein YdfI (213 aa).

A Response regulatory domain is found at 3–118; it reads KVLIVDDHLV…TLFHTMDAAI (116 aa). Residue Asp-54 is modified to 4-aspartylphosphate. Residues 142–207 form the HTH luxR-type domain; sequence KQRNETQLTE…EAVTIAMQKG (66 aa). A DNA-binding region (H-T-H motif) is located at residues 166-185; the sequence is SKAIAFDLGVSERTVKSRLT.

Phosphorylated by YdfH.

It localises to the cytoplasm. Functionally, member of the two-component regulatory system YdfH/YdfI. Regulates the transcription of ydfJ by binding to its promoter region. The polypeptide is Transcriptional regulatory protein YdfI (ydfI) (Bacillus subtilis (strain 168)).